Reading from the N-terminus, the 449-residue chain is tRNA-2-methylthio-N(6)-dimethylallyladenosine synthase (449 aa).

Residues 13–128 (RRIFIETYGC…LPHLIGTVEK (116 aa)) enclose the MTTase N-terminal domain. [4Fe-4S] cluster contacts are provided by Cys22, Cys58, Cys92, Cys166, Cys170, and Cys173. The Radical SAM core domain maps to 152–383 (SRIKISGFIS…ITLQLKISLM (232 aa)). Positions 386–449 (KENIGKTMEI…AATLFGDPKL (64 aa)) constitute a TRAM domain.

It belongs to the methylthiotransferase family. MiaB subfamily. In terms of assembly, monomer. Requires [4Fe-4S] cluster as cofactor.

It is found in the cytoplasm. The enzyme catalyses N(6)-dimethylallyladenosine(37) in tRNA + (sulfur carrier)-SH + AH2 + 2 S-adenosyl-L-methionine = 2-methylsulfanyl-N(6)-dimethylallyladenosine(37) in tRNA + (sulfur carrier)-H + 5'-deoxyadenosine + L-methionine + A + S-adenosyl-L-homocysteine + 2 H(+). In terms of biological role, catalyzes the methylthiolation of N6-(dimethylallyl)adenosine (i(6)A), leading to the formation of 2-methylthio-N6-(dimethylallyl)adenosine (ms(2)i(6)A) at position 37 in tRNAs that read codons beginning with uridine. The chain is tRNA-2-methylthio-N(6)-dimethylallyladenosine synthase from Azobacteroides pseudotrichonymphae genomovar. CFP2.